The primary structure comprises 557 residues: CTP synthase (557 aa).

The segment at 1-267 (MAKFVFVTGG…CREVLDVLDL (267 aa)) is amidoligase domain. Ser-13 is a CTP binding site. Residue Ser-13 participates in UTP binding. Residues 14–19 (SIGKGI) and Asp-71 contribute to the ATP site. Mg(2+)-binding residues include Asp-71 and Glu-141. Residues 148-150 (DIE), 188-193 (KTKPTQ), and Lys-224 each bind CTP. Residues 188–193 (KTKPTQ) and Lys-224 each bind UTP. The region spanning 292 to 534 (KVALVGKYVQ…IEAAQQRLPC (243 aa)) is the Glutamine amidotransferase type-1 domain. Gly-354 serves as a coordination point for L-glutamine. Cys-381 functions as the Nucleophile; for glutamine hydrolysis in the catalytic mechanism. Residues 382 to 385 (LGMQ), Glu-405, and Arg-462 contribute to the L-glutamine site. Residues His-507 and Glu-509 contribute to the active site. The tract at residues 532–557 (LPCSPSEAMRQQNNSAAGSSHPSLQP) is disordered. Residues 540–557 (MRQQNNSAAGSSHPSLQP) show a composition bias toward polar residues.

Belongs to the CTP synthase family. In terms of assembly, homotetramer.

The enzyme catalyses UTP + L-glutamine + ATP + H2O = CTP + L-glutamate + ADP + phosphate + 2 H(+). It carries out the reaction L-glutamine + H2O = L-glutamate + NH4(+). It catalyses the reaction UTP + NH4(+) + ATP = CTP + ADP + phosphate + 2 H(+). It participates in pyrimidine metabolism; CTP biosynthesis via de novo pathway; CTP from UDP: step 2/2. With respect to regulation, allosterically activated by GTP, when glutamine is the substrate; GTP has no effect on the reaction when ammonia is the substrate. The allosteric effector GTP functions by stabilizing the protein conformation that binds the tetrahedral intermediate(s) formed during glutamine hydrolysis. Inhibited by the product CTP, via allosteric rather than competitive inhibition. Catalyzes the ATP-dependent amination of UTP to CTP with either L-glutamine or ammonia as the source of nitrogen. Regulates intracellular CTP levels through interactions with the four ribonucleotide triphosphates. This Synechococcus sp. (strain CC9311) protein is CTP synthase.